The primary structure comprises 1096 residues: Cohesin subunit scc-3 (1096 aa).

The segment covering 1–21 has biased composition (polar residues); that stretch reads MSETPTDQSPQRMSTRNQARV. Disordered stretches follow at residues 1 to 53 and 67 to 106; these read MSET…KKRA and NLNN…ESAE. A coiled-coil region spans residues 261-312; it reads IELTQSKEKTSKQIEAEKAKLKNNSAGNEKYEALVAQRTQTEERAEEIRQII. Residues 320–405 enclose the SCD domain; sequence FVHRYRDVVP…NKFKDRLVSM (86 aa). Positions 1057–1096 are disordered; the sequence is DNMSVRSGMTVTSNATMRSTASSTRGRGRGRGRSRIADDF. The span at 1060 to 1073 shows a compositional bias: polar residues; that stretch reads SVRSGMTVTSNATM.

This sequence belongs to the SCC3 family. As to quaternary structure, component of the cohesin complex, composed of the smc-1 and smc-3 heterodimer attached via their hinge domain, scc-1 which links them, and scc-3. Interacts with scc-1, smc-1 and tim-1. As to expression, expressed in gonadal cells.

It is found in the nucleus. The protein localises to the chromosome. Functionally, component of the cohesin complex, a complex required for the cohesion of sister chromatids after DNA replication. The cohesin complex apparently forms a large proteinaceous ring within which sister chromatids can be trapped. At anaphase, the scc-1 subunit of the complex is cleaved and dissociates from chromatin, allowing sister chromatids to segregate. The cohesin complex may also play a role in spindle pole assembly during mitosis. Plays an essential role in cell division during embryonic development. Required for the assembly of the synaptonemal complex between homologous chromosomes to promote sister chromatid cohesion during mitosis and meiosis. Has a role in stabilization of homologous chromosome associations during meiotic synapsis. Required for chromosome segregation during mitosis and meiosis. Plays a role in DNA double-strand break (DSB) repair during meiotic recombination and promotes the assembly of the 9-1-1 cell-cycle checkpoint response complex which is required for inducing apoptosis in response to DNA damage, at DNA damage sites. This chain is Cohesin subunit scc-3, found in Caenorhabditis elegans.